We begin with the raw amino-acid sequence, 118 residues long: Vitelline membrane protein Vm32E (118 aa).

A signal peptide spans 1-17 (MKIVALTLVAFVALAGA). One can recognise a VM domain in the interval 36 to 75 (GYPAPPCPTNYLFSCQPNLAPAPCAQEAQAPAYGSAGAYT).

This sequence belongs to the vitelline membrane family.

It localises to the secreted. Major early eggshell protein. The sequence is that of Vitelline membrane protein Vm32E from Drosophila mauritiana (Fruit fly).